We begin with the raw amino-acid sequence, 2094 residues long: Non-reducing polyketide synthase ustP (2094 aa).

The N-terminal acylcarrier protein transacylase (SAT) domain stretch occupies residues 9–243; that stretch reads VFGDLSVPYH…GKIQVGGLFH (235 aa). The segment at 357–377 is disordered; sequence NTAGVDSSSRGSGHADAEKQP. Residues 379-813 enclose the Ketosynthase family 3 (KS3) domain; it reads RSKIAIIGFS…GGNSSVLVED (435 aa). Active-site for beta-ketoacyl synthase activity residues include cysteine 551, histidine 686, and histidine 727. The interval 914–1227 is malonyl-CoA:ACP transacylase (MAT) domain; that stretch reads FSFTGQGSQY…EDDCKIFTPA (314 aa). Catalysis depends on serine 1004, which acts as the For acyl/malonyl transferase activity. The interval 1305–1629 is product template (PT) domain; the sequence is TTSVQYITAE…QRKVLDLVLP (325 aa). Residues 1308–1445 are N-terminal hotdog fold; that stretch reads VQYITAESYG…CSGFFTDKSR (138 aa). Residues 1308–1625 form the PKS/mFAS DH domain; sequence VQYITAESYG…FAAVQRKVLD (318 aa). Histidine 1341 acts as the Proton acceptor; for dehydratase activity in catalysis. Residues 1473 to 1625 are C-terminal hotdog fold; sequence GSVHMIKTGM…FAAVQRKVLD (153 aa). Aspartate 1536 functions as the Proton donor; for dehydratase activity in the catalytic mechanism. Positions 1644 to 1671 are enriched in low complexity; it reads AAAAPSQRQQQQQQQQQQQPAQPVAASQ. The disordered stretch occupies residues 1644–1689; the sequence is AAAAPSQRQQQQQQQQQQQPAQPVAASQESGMDDMPPTLVPSEKKD. A Carrier domain is found at 1689–1763; that stretch reads DVPSEKLKVI…ELVRHILGSS (75 aa). Serine 1723 carries the post-translational modification O-(pantetheine 4'-phosphoryl)serine. The segment covering 1762-1778 has biased composition (polar residues); sequence SSTPSSDSGPATPSITP. The segment at 1762–1782 is disordered; the sequence is SSTPSSDSGPATPSITPLQEP. A claisen cyclase domain region spans residues 1844–2069; it reads KVWLFPDGSG…GVVEGAHHFS (226 aa). The active-site For Claisen cyclase activity is the serine 1916.

It catalyses the reaction 6 malonyl-CoA + acetyl-CoA + 6 H(+) = naphtopyrone YWA1 + 6 CO2 + 7 CoA + H2O. It participates in secondary metabolite biosynthesis. Its function is as follows. Non-reducing polyketide synthase; part of the gene cluster that mediates the biosynthesis of ustilaginoidins, dimeric gamma-naphthopyrones isolated from different fungal species. The first step in the biosynthesis of ustilaginoidins is the production of gamma-naphthopyrone precursor YWA1 by the non-reducing polyketide synthase ustP, via condensation of one acetyl-CoA starter unit with 6 malonyl-CoA units. YWA1 is then probably substrate of the ustZ to yield norrubrofusarin via a dehydration reaction. A key enzyme in the biosynthetic pathway is the laccase ustL, which catalyzes the oxidative dimerization of norrubrofusarin to ustilaginoidin A. It can produce the M- and P-atropisomers in varying amounts, depending on the reaction conditions. For the biosynthesis of 3-methylustilaginoid in derivatives such as chaetochromin A, a methylated derivative of YWA1 is required. The C-methylation is considered to be catalyzed by ustM, the phosphopantetheine attachment site of which indicates that it acts on the growing polyketide chain before release of the product. For the biosynthesis of chaetochromin A, it is assumed that saturation of the D2 double bond takes place before dimerization, and is probably catalyzed by an external reductase because no candidate gene was identified within the cluster. This chain is Non-reducing polyketide synthase ustP, found in Ustilaginoidea virens (Rice false smut fungus).